We begin with the raw amino-acid sequence, 353 residues long: Photosystem II protein D1 (353 aa).

The residue at position 2 (Thr-2) is an N-acetylthreonine. Phosphothreonine is present on Thr-2. 3 consecutive transmembrane segments (helical) span residues 29-46 (YIGW…TATS), 118-133 (HFLL…EWEL), and 142-156 (WIAV…AATA). His-118 is a binding site for chlorophyll a. Position 126 (Tyr-126) interacts with pheophytin a. 2 residues coordinate [CaMn4O5] cluster: Asp-170 and Glu-189. A helical transmembrane segment spans residues 197–218 (FHMLGVAGVFGGSLFSAMHGSL). A chlorophyll a-binding site is contributed by His-198. Residues His-215 and 264–265 (SF) contribute to the a quinone site. His-215 provides a ligand contact to Fe cation. His-272 provides a ligand contact to Fe cation. A helical transmembrane segment spans residues 274 to 288 (FLAAWPVVGIWFTAL). [CaMn4O5] cluster-binding residues include His-332, Glu-333, Asp-342, and Ala-344. Residues 345-353 (AVEAPSTNG) constitute a propeptide that is removed on maturation.

It belongs to the reaction center PufL/M/PsbA/D family. In terms of assembly, PSII is composed of 1 copy each of membrane proteins PsbA, PsbB, PsbC, PsbD, PsbE, PsbF, PsbH, PsbI, PsbJ, PsbK, PsbL, PsbM, PsbT, PsbX, PsbY, PsbZ, Psb30/Ycf12, at least 3 peripheral proteins of the oxygen-evolving complex and a large number of cofactors. It forms dimeric complexes. It depends on The D1/D2 heterodimer binds P680, chlorophylls that are the primary electron donor of PSII, and subsequent electron acceptors. It shares a non-heme iron and each subunit binds pheophytin, quinone, additional chlorophylls, carotenoids and lipids. D1 provides most of the ligands for the Mn4-Ca-O5 cluster of the oxygen-evolving complex (OEC). There is also a Cl(-1) ion associated with D1 and D2, which is required for oxygen evolution. The PSII complex binds additional chlorophylls, carotenoids and specific lipids. as a cofactor. Tyr-161 forms a radical intermediate that is referred to as redox-active TyrZ, YZ or Y-Z. In terms of processing, C-terminally processed by CTPA; processing is essential to allow assembly of the oxygen-evolving complex and thus photosynthetic growth.

The protein localises to the plastid. It is found in the chloroplast thylakoid membrane. The enzyme catalyses 2 a plastoquinone + 4 hnu + 2 H2O = 2 a plastoquinol + O2. In terms of biological role, photosystem II (PSII) is a light-driven water:plastoquinone oxidoreductase that uses light energy to abstract electrons from H(2)O, generating O(2) and a proton gradient subsequently used for ATP formation. It consists of a core antenna complex that captures photons, and an electron transfer chain that converts photonic excitation into a charge separation. The D1/D2 (PsbA/PsbD) reaction center heterodimer binds P680, the primary electron donor of PSII as well as several subsequent electron acceptors. The sequence is that of Photosystem II protein D1 from Drimys granadensis.